The primary structure comprises 477 residues: UDP-N-acetylmuramate--L-alanine ligase (477 aa).

Position 122–128 (122–128 (GTHGKTT)) interacts with ATP.

The protein belongs to the MurCDEF family.

Its subcellular location is the cytoplasm. It carries out the reaction UDP-N-acetyl-alpha-D-muramate + L-alanine + ATP = UDP-N-acetyl-alpha-D-muramoyl-L-alanine + ADP + phosphate + H(+). Its pathway is cell wall biogenesis; peptidoglycan biosynthesis. Functionally, cell wall formation. This is UDP-N-acetylmuramate--L-alanine ligase from Xylella fastidiosa (strain M12).